The sequence spans 280 residues: Chlorophyll a-b binding protein CP26, chloroplastic (280 aa).

A chloroplast-targeting transit peptide spans 1-48 (MASLGVSEMLGTPLNFRAVSRSSAPLASSPSTFKTVALFSKKKPAPAK). Chlorophyll b is bound at residue phenylalanine 70. Chlorophyll a contacts are provided by tyrosine 95, glutamate 114, and histidine 117. 2 consecutive transmembrane segments (helical) span residues 110-130 (YQAFELIHARWAMLGAAGFII) and 167-187 (IPINLVLAVVAEVVLLGGAEY). Residues arginine 119, isoleucine 167, glutamate 186, and arginine 189 each coordinate chlorophyll b. Residues lysine 224, glutamate 225, asparagine 228, arginine 230, glutamine 242, and histidine 257 each contribute to the chlorophyll a site. The chain crosses the membrane as a helical span at residues 231-251 (LAMFAMLGFFIQAYVTGEGPV).

This sequence belongs to the light-harvesting chlorophyll a/b-binding (LHC) protein family. In terms of assembly, forms heterotrimers with LHCB3. The LHC complex consists of chlorophyll a-b binding proteins. Requires Binds at least 14 chlorophylls (8 Chl-a and 6 Chl-b) and carotenoids such as lutein and neoxanthin. as cofactor. Photoregulated by reversible phosphorylation of its threonine residues.

It localises to the plastid. It is found in the chloroplast thylakoid membrane. The light-harvesting complex (LHC) functions as a light receptor, it captures and delivers excitation energy to photosystems with which it is closely associated. The protein is Chlorophyll a-b binding protein CP26, chloroplastic (LHCB5) of Arabidopsis thaliana (Mouse-ear cress).